The sequence spans 178 residues: Aspartic proteinase nepenthesin-2 (178 aa).

Residue D98 is part of the active site.

This sequence belongs to the peptidase A1 family.

Its subcellular location is the secreted. The catalysed reaction is Similar to pepsin, but also cleaves on either side of Asp and at Lys-|-Arg.. With respect to regulation, inhibited by pepstatin and by diazoacetyl-D,L-norleucine methyl ester (DAN) in the presence of Cu(2+) ions. Extracellular proteinase found in the pitcher fluid of carnivorous plants. Digest prey for nitrogen uptake. In Nepenthes distillatoria (Pitcher plant), this protein is Aspartic proteinase nepenthesin-2.